We begin with the raw amino-acid sequence, 1009 residues long: DENN domain-containing protein 1A (1009 aa).

Positions 13–145 constitute a uDENN domain; it reads FEVYVEVAYP…HKLPIPDPGV (133 aa). Residues 162-298 form the cDENN domain; sequence ELPSIPENRN…VISSLKNRLK (137 aa). Residues 300–378 enclose the dDENN domain; sequence VSTTTGDGVA…DGRLDLLNSG (79 aa). The short motif at 381 to 385 is the FXDXF motif element; that stretch reads FSDVF. The disordered stretch occupies residues 453 to 564; the sequence is DIAENGCAPT…TGPVPAPPDR (112 aa). Phosphoserine is present on Ser-473. Basic and acidic residues predominate over residues 477–489; the sequence is EAKDPKLREDRRP. Positions 500 to 509 are enriched in basic residues; that stretch reads PRPHVVKRPK. Residue Thr-519 is modified to Phosphothreonine. 5 positions are modified to phosphoserine: Ser-520, Ser-523, Ser-536, Ser-538, and Ser-546. The Clathrin box motif lies at 569–578; that stretch reads DLLEDVFSNL. Ser-592 carries the post-translational modification Phosphoserine. The segment at 648-714 is disordered; the sequence is IPSKPPAASP…RKTPELGIVP (67 aa). Position 749 is a phosphoserine (Ser-749). Disordered regions lie at residues 796-831 and 928-1009; these read STLPSRPATPNVATPFTPQFSFPPAGTPTPFPQPPL and RSSA…ETFE. Pro residues-rich tracts occupy residues 820-831 and 945-957; these read AGTPTPFPQPPL and GDPPLLPPRPPQG. Basic and acidic residues predominate over residues 972–983; the sequence is DPFEDLLQKTKQ. Residues 986 to 997 show a composition bias toward low complexity; that stretch reads SPSPALAPAPDS. Basic and acidic residues predominate over residues 999-1009; it reads EQLRKQWETFE.

Interacts with RAB35. Interacts with clathrin and with the adapter protein complex 2, AP-2. Interacts with ITSN1 and SH3GL2. Interacts (when phosphorylated) with YWHAE. Phosphorylated on serine and/or threonine in an Akt-dependent manner. Phosphorylation probably regulates the guanine nucleotide exchange factor (GEF) activity, possibly by disrupting an intramolecular interaction between the DENN domain and the C-terminus of the protein, thereby relieving the autoinhibition.

The protein localises to the cytoplasmic vesicle. It localises to the clathrin-coated vesicle membrane. The protein resides in the presynaptic cell membrane. Its activity is regulated as follows. The guanine nucleotide exchange factor (GEF) activity is autoinhibited. Autoinhibition may be the result of intramolecular interaction between the DENN domain and the C-terminus, which is disrupted upon phosphorylation. Activation is regulated by Akt activation. Its function is as follows. Guanine nucleotide exchange factor (GEF) regulating clathrin-mediated endocytosis through RAB35 activation. Promotes the exchange of GDP to GTP, converting inactive GDP-bound RAB35 into its active GTP-bound form. Regulates clathrin-mediated endocytosis of synaptic vesicles and mediates exit from early endosomes. Binds phosphatidylinositol-phosphates (PtdInsPs), with some preference for PtdIns(3)P. The polypeptide is DENN domain-containing protein 1A (Homo sapiens (Human)).